The sequence spans 282 residues: 2-dehydro-3-deoxyphosphooctonate aldolase (282 aa).

The protein belongs to the KdsA family.

It is found in the cytoplasm. It catalyses the reaction D-arabinose 5-phosphate + phosphoenolpyruvate + H2O = 3-deoxy-alpha-D-manno-2-octulosonate-8-phosphate + phosphate. The protein operates within carbohydrate biosynthesis; 3-deoxy-D-manno-octulosonate biosynthesis; 3-deoxy-D-manno-octulosonate from D-ribulose 5-phosphate: step 2/3. It functions in the pathway bacterial outer membrane biogenesis; lipopolysaccharide biosynthesis. This chain is 2-dehydro-3-deoxyphosphooctonate aldolase, found in Chromobacterium violaceum (strain ATCC 12472 / DSM 30191 / JCM 1249 / CCUG 213 / NBRC 12614 / NCIMB 9131 / NCTC 9757 / MK).